The sequence spans 212 residues: ATP phosphoribosyltransferase (212 aa).

The protein belongs to the ATP phosphoribosyltransferase family. Short subfamily. As to quaternary structure, heteromultimer composed of HisG and HisZ subunits.

It localises to the cytoplasm. The catalysed reaction is 1-(5-phospho-beta-D-ribosyl)-ATP + diphosphate = 5-phospho-alpha-D-ribose 1-diphosphate + ATP. It functions in the pathway amino-acid biosynthesis; L-histidine biosynthesis; L-histidine from 5-phospho-alpha-D-ribose 1-diphosphate: step 1/9. In terms of biological role, catalyzes the condensation of ATP and 5-phosphoribose 1-diphosphate to form N'-(5'-phosphoribosyl)-ATP (PR-ATP). Has a crucial role in the pathway because the rate of histidine biosynthesis seems to be controlled primarily by regulation of HisG enzymatic activity. This Prochlorococcus marinus (strain AS9601) protein is ATP phosphoribosyltransferase.